The sequence spans 107 residues: High mobility group protein HMG-I/HMG-Y (107 aa).

Residues 1–13 (MSESVSKSSQPLA) show a composition bias toward polar residues. The tract at residues 1–107 (MSESVSKSSQ…ISQESSEEEQ (107 aa)) is disordered. Residue Ser-2 is modified to N-acetylserine. Lys-7 carries the post-translational modification N6-acetyllysine. The residue at position 8 (Ser-8) is an ADP-ribosylserine. At Ser-9 the chain carries ADP-ribosylserine; alternate. Ser-9 bears the Phosphoserine; alternate mark. At Lys-15 the chain carries N6-acetyllysine; alternate. A Glycyl lysine isopeptide (Lys-Gly) (interchain with G-Cter in SUMO2); alternate cross-link involves residue Lys-15. Positions 15-24 (KQEKDGTEKR) are enriched in basic and acidic residues. The a.T hook 1 DNA-binding region spans 21–31 (TEKRGRGRPRK). At Arg-26 the chain carries Asymmetric dimethylarginine; alternate. Omega-N-methylarginine; alternate is present on Arg-26. At Arg-26 the chain carries Symmetric dimethylarginine; alternate. Ser-36 bears the Phosphoserine; by HIPK2 and CDC2 mark. Thr-39 carries the post-translational modification Phosphothreonine. A phosphoserine mark is found at Ser-44 and Ser-49. A Phosphothreonine; by HIPK2 and CDC2 modification is found at Thr-53. 2 consecutive DNA-binding regions (a.T hook) follow at residues 53 to 63 (TPKRPRGRPKG) and 78 to 89 (TPGRKPRGRPKK). The interaction with HIPK2 stretch occupies residues 53–77 (TPKRPRGRPKGSKNKGTAKTRKVTT). A compositionally biased stretch (basic residues) spans 55–74 (KRPRGRPKGSKNKGTAKTRK). 2 positions are modified to asymmetric dimethylarginine; by PRMT6; alternate: Arg-58 and Arg-60. Arg-58 and Arg-60 each carry omega-N-methylarginine; by PRMT6; alternate. Residue Thr-78 is modified to Phosphothreonine; by HIPK2 and CDC2. Residues 93–107 (EEEEGISQESSEEEQ) show a composition bias toward acidic residues. Phosphoserine is present on residues Ser-99, Ser-102, and Ser-103.

Belongs to the HMGA family. In terms of assembly, interacts with HIPK2. In terms of processing, isoforms HMG-I and HMG-Y can be phosphorylated by HIPK2. Phosphorylation may modulate DNA-binding affinity. Post-translationally, methylation at Arg-58 is mutually exclusive with methylation at Arg-60.

The protein resides in the nucleus. Its subcellular location is the chromosome. HMG-I/Y bind preferentially to the minor groove of A+T rich regions in double-stranded DNA. It is suggested that these proteins could function in nucleosome phasing and in the 3'-end processing of mRNA transcripts. They are also involved in the transcription regulation of genes containing, or in close proximity to A+T-rich regions. This is High mobility group protein HMG-I/HMG-Y (Hmga1) from Rattus norvegicus (Rat).